A 193-amino-acid chain; its full sequence is Imidazoleglycerol-phosphate dehydratase (193 aa).

Belongs to the imidazoleglycerol-phosphate dehydratase family.

It is found in the cytoplasm. The catalysed reaction is D-erythro-1-(imidazol-4-yl)glycerol 3-phosphate = 3-(imidazol-4-yl)-2-oxopropyl phosphate + H2O. It functions in the pathway amino-acid biosynthesis; L-histidine biosynthesis; L-histidine from 5-phospho-alpha-D-ribose 1-diphosphate: step 6/9. The sequence is that of Imidazoleglycerol-phosphate dehydratase from Staphylococcus carnosus (strain TM300).